The sequence spans 603 residues: Proline--tRNA ligase (603 aa).

Belongs to the class-II aminoacyl-tRNA synthetase family. ProS type 1 subfamily. Homodimer.

The protein resides in the cytoplasm. It carries out the reaction tRNA(Pro) + L-proline + ATP = L-prolyl-tRNA(Pro) + AMP + diphosphate. Functionally, catalyzes the attachment of proline to tRNA(Pro) in a two-step reaction: proline is first activated by ATP to form Pro-AMP and then transferred to the acceptor end of tRNA(Pro). As ProRS can inadvertently accommodate and process non-cognate amino acids such as alanine and cysteine, to avoid such errors it has two additional distinct editing activities against alanine. One activity is designated as 'pretransfer' editing and involves the tRNA(Pro)-independent hydrolysis of activated Ala-AMP. The other activity is designated 'posttransfer' editing and involves deacylation of mischarged Ala-tRNA(Pro). The misacylated Cys-tRNA(Pro) is not edited by ProRS. The sequence is that of Proline--tRNA ligase from Paenarthrobacter aurescens (strain TC1).